Here is a 236-residue protein sequence, read N- to C-terminus: Large ribosomal subunit protein eL6 (236 aa).

The protein belongs to the eukaryotic ribosomal protein eL6 family.

This chain is Large ribosomal subunit protein eL6 (rpl6), found in Dictyostelium discoideum (Social amoeba).